The primary structure comprises 1020 residues: C2 and GRAM domain-containing protein At1g03370 (1020 aa).

The region spanning 1–102 is the C2 1 domain; it reads MKLQVRVVEA…ENQSLGTVWY (102 aa). Ca(2+) contacts are provided by Asp-17, Asp-23, Asp-69, Asp-71, and Asp-77. Polar residues-rich tracts occupy residues 134–144 and 158–172; these read TSSGDQTSASR and TCAS…SSIP. The tract at residues 134–172 is disordered; that stretch reads TSSGDQTSASRSPDLRLESPIDPSTCASPSRSDDASSIP. Residues 249–421 form the VASt 1 domain; it reads SGGVVVDQLF…LLAQSVKPVD (173 aa). Residues 454-474 form a helical membrane-spanning segment; that stretch reads FTVLSTFLIGIYVFVHIVFAI. Residues 517 to 635 enclose the C2 2 domain; it reads QARKQKGSDH…NISDLADVWV (119 aa). Residues Asp-551, Asp-557, Asp-604, Phe-605, and Asp-606 each contribute to the Ca(2+) site. The GRAM domain occupies 689-752; the sequence is AFQKLFGLPQ…LWEDIEEIQV (64 aa). The VASt 2 domain occupies 848 to 1010; it reads RFSEVFSLTL…MTFGFLEKEY (163 aa).

It depends on Ca(2+) as a cofactor.

The protein localises to the membrane. The protein is C2 and GRAM domain-containing protein At1g03370 of Arabidopsis thaliana (Mouse-ear cress).